The primary structure comprises 235 residues: Interleukin-34 (235 aa).

The signal sequence occupies residues 1 to 20 (MPWGLAWLYCLGILLDVALG). The N-linked (GlcNAc...) asparagine glycan is linked to Asn100.

Belongs to the IL-34 family. In terms of assembly, homodimer. Interacts with CSF1R.

It localises to the secreted. In terms of biological role, cytokine that promotes the proliferation, survival and differentiation of monocytes and macrophages. Promotes the release of pro-inflammatory chemokines, and thereby plays an important role in innate immunity and in inflammatory processes. Plays an important role in the regulation of osteoclast proliferation and differentiation, and in the regulation of bone resorption. Signaling via CSF1R and its downstream effectors stimulates phosphorylation of MAPK1/ERK2 AND MAPK3/ERK1. The chain is Interleukin-34 (Il34) from Mus musculus (Mouse).